Reading from the N-terminus, the 298-residue chain is 33 kDa chaperonin (298 aa).

2 cysteine pairs are disulfide-bonded: C239–C241 and C272–C275.

Belongs to the HSP33 family. Under oxidizing conditions two disulfide bonds are formed involving the reactive cysteines. Under reducing conditions zinc is bound to the reactive cysteines and the protein is inactive.

Its subcellular location is the cytoplasm. Redox regulated molecular chaperone. Protects both thermally unfolding and oxidatively damaged proteins from irreversible aggregation. Plays an important role in the bacterial defense system toward oxidative stress. This Picosynechococcus sp. (strain ATCC 27264 / PCC 7002 / PR-6) (Agmenellum quadruplicatum) protein is 33 kDa chaperonin.